The chain runs to 122 residues: MNVQEIHNIREACITILSGTKHNSVLFEPCDKFDEVINSLDIDPDSKETLRRSVSLLVGTRNHKRGCNIDKKTKDMLNKVYEQKQYLTKEEREFVAKKCNLTPLQVRVWFANKRIRNKNTKM.

Positions 62–121 (NHKRGCNIDKKTKDMLNKVYEQKQYLTKEEREFVAKKCNLTPLQVRVWFANKRIRNKNTK) form a DNA-binding region, homeobox.

Belongs to the MATA1 family. Forms a heterodimer with ALPHA2.

Its subcellular location is the nucleus. Mating type proteins are sequence specific DNA-binding proteins that act as master switches in yeast differentiation by controlling gene expression in a cell type-specific fashion. Transcriptional corepressor that acts in conjunction with ALPHA2 to repress transcription of haploid-specific genes and of MATALPHA1. The polypeptide is Mating-type protein A1 (MATA1) (Nakaseomyces delphensis (Yeast)).